A 312-amino-acid chain; its full sequence is Carbonic anhydrase 4 (312 aa).

A signal peptide spans 1–18 (MRLLLALLVLAAAPPQAR). The Alpha-carbonic anhydrase domain occupies 21-285 (SHWCYQIQVK…LGQRQVFRSG (265 aa)). 2 disulfides stabilise this stretch: C24-C36 and C46-C229. N33 carries N-linked (GlcNAc...) asparagine glycosylation. H88 acts as the Proton donor/acceptor in catalysis. Zn(2+) contacts are provided by H115, H117, and H140. Residues N152 and N195 are each glycosylated (N-linked (GlcNAc...) asparagine). Residue 225–226 (TT) coordinates substrate. N-linked (GlcNAc...) asparagine glycosylation is present at N265. A lipid anchor (GPI-anchor amidated serine) is attached at S284. Positions 285 to 312 (GAPGLLLAQPLPTLLAPVLACLTVGFLR) are cleaved as a propeptide — removed in mature form.

This sequence belongs to the alpha-carbonic anhydrase family. Interacts with SLC4A4. Zn(2+) serves as cofactor.

It localises to the cell membrane. The catalysed reaction is hydrogencarbonate + H(+) = CO2 + H2O. Inhibited by acetazolamide. Functionally, catalyzes the reversible hydration of carbon dioxide into bicarbonate and protons and thus is essential to maintaining intracellular and extracellular pH. May stimulate the sodium/bicarbonate transporter activity of SLC4A4 that acts in pH homeostasis. It is essential for acid overload removal from the retina and retina epithelium, and acid release in the choriocapillaris in the choroid. The chain is Carbonic anhydrase 4 (CA4) from Bos taurus (Bovine).